Consider the following 215-residue polypeptide: Endonuclease III (215 aa).

Positions 113–132 (REDLESLPGVGRKTANVILN) constitute a HhH domain. Residues cysteine 192, cysteine 199, cysteine 202, and cysteine 208 each contribute to the [4Fe-4S] cluster site.

It belongs to the Nth/MutY family. [4Fe-4S] cluster serves as cofactor.

The enzyme catalyses 2'-deoxyribonucleotide-(2'-deoxyribose 5'-phosphate)-2'-deoxyribonucleotide-DNA = a 3'-end 2'-deoxyribonucleotide-(2,3-dehydro-2,3-deoxyribose 5'-phosphate)-DNA + a 5'-end 5'-phospho-2'-deoxyribonucleoside-DNA + H(+). DNA repair enzyme that has both DNA N-glycosylase activity and AP-lyase activity. The DNA N-glycosylase activity releases various damaged pyrimidines from DNA by cleaving the N-glycosidic bond, leaving an AP (apurinic/apyrimidinic) site. The AP-lyase activity cleaves the phosphodiester bond 3' to the AP site by a beta-elimination, leaving a 3'-terminal unsaturated sugar and a product with a terminal 5'-phosphate. The sequence is that of Endonuclease III from Buchnera aphidicola subsp. Baizongia pistaciae (strain Bp).